A 265-amino-acid polypeptide reads, in one-letter code: MIKWPWKAQEITQNEDWPWDDALAIPLLVNLTAQEQARLIALAERFLQQKRLVALQGFELDSLKSARIALIFCLPILELGIEWLDGFHEVLIYPAPFVVDDEWEDDIGLVHSQRVVQSGQSWQQGPIILNWLDILDSFDASGFNLIIHEVAHKLDMRNGDRASGIPFIPLRDVAGWEHDLHAAMNNIQDEIDLVGESAASIDAYAATDPAECFAVLSEYFFSAPELFAPRFPALWQRFCQFYRQDPSQRLRVSAAEGDYGEESEH.

Residues His-111, His-148, His-152, and Glu-211 each contribute to the Zn(2+) site.

It belongs to the MtfA family. In terms of assembly, interacts with Mlc. It depends on Zn(2+) as a cofactor.

It is found in the cytoplasm. Its function is as follows. Involved in the modulation of the activity of the glucose-phosphotransferase system (glucose-PTS). Interacts with the transcriptional repressor Mlc, preventing its interaction with DNA and leading to the modulation of expression of genes regulated by Mlc, including ptsG, which encodes the PTS system glucose-specific EIICB component. Shows zinc-dependent metallopeptidase activity. The sequence is that of Mlc titration factor A from Salmonella agona (strain SL483).